Reading from the N-terminus, the 192-residue chain is Adenylate kinase (192 aa).

10-18 (GVPGVGGTT) contacts ATP.

The protein belongs to the archaeal adenylate kinase family. As to quaternary structure, monomer.

Its subcellular location is the cytoplasm. The catalysed reaction is AMP + ATP = 2 ADP. This Methanococcus maripaludis (strain DSM 14266 / JCM 13030 / NBRC 101832 / S2 / LL) protein is Adenylate kinase.